We begin with the raw amino-acid sequence, 249 residues long: 1-(5-phosphoribosyl)-5-[(5-phosphoribosylamino)methylideneamino] imidazole-4-carboxamide isomerase (249 aa).

Catalysis depends on aspartate 8, which acts as the Proton acceptor. Catalysis depends on aspartate 131, which acts as the Proton donor.

The protein belongs to the HisA/HisF family.

It is found in the cytoplasm. The catalysed reaction is 1-(5-phospho-beta-D-ribosyl)-5-[(5-phospho-beta-D-ribosylamino)methylideneamino]imidazole-4-carboxamide = 5-[(5-phospho-1-deoxy-D-ribulos-1-ylimino)methylamino]-1-(5-phospho-beta-D-ribosyl)imidazole-4-carboxamide. Its pathway is amino-acid biosynthesis; L-histidine biosynthesis; L-histidine from 5-phospho-alpha-D-ribose 1-diphosphate: step 4/9. This chain is 1-(5-phosphoribosyl)-5-[(5-phosphoribosylamino)methylideneamino] imidazole-4-carboxamide isomerase, found in Nitrosomonas europaea (strain ATCC 19718 / CIP 103999 / KCTC 2705 / NBRC 14298).